The following is a 99-amino-acid chain: U1-theraphotoxin-Tal1a (99 aa).

The N-terminal stretch at 1–22 (MNTIQVIIFAVVLVLTVTVGQA) is a signal peptide. A propeptide spanning residues 23-57 (DEDSAETSLLRKLKEAEASLFGQHLEESQHSREKR) is cleaved from the precursor. 3 disulfide bridges follow: cysteine 58–cysteine 73, cysteine 65–cysteine 78, and cysteine 72–cysteine 93. Serine 98 carries the serine amide modification.

This sequence belongs to the neurotoxin 14 (magi-1) family. 08 (Ltx-4) subfamily. As to expression, expressed by the venom gland.

Its subcellular location is the secreted. Its function is as follows. Insecticidal toxin that shows strong lethal effects on American cockroaches (P.americana) and common mealbeetle (T.molitor). Possibly acts by blocking ion channel currents. Also shows significant analgesic effects in mice models of pain including abdominal writhing induced by acetic acid and formalin-induced paw licking tests. In addition, exerts marked inhibition of proliferation of some human tumor cell lines including C8166, Molt-4, A-549, BIU-87, T24, and Calu-6. The chain is U1-theraphotoxin-Tal1a from Tliltocatl albopilosus (Curlyhair tarantula).